We begin with the raw amino-acid sequence, 91 residues long: Signal recognition particle 19 kDa protein (91 aa).

The protein belongs to the SRP19 family. In terms of assembly, part of the signal recognition particle protein translocation system, which is composed of SRP and FtsY. Archaeal SRP consists of a 7S RNA molecule of 300 nucleotides and two protein subunits: SRP54 and SRP19.

The protein resides in the cytoplasm. Functionally, involved in targeting and insertion of nascent membrane proteins into the cytoplasmic membrane. Binds directly to 7S RNA and mediates binding of the 54 kDa subunit of the SRP. The chain is Signal recognition particle 19 kDa protein from Methanothermobacter thermautotrophicus (strain ATCC 29096 / DSM 1053 / JCM 10044 / NBRC 100330 / Delta H) (Methanobacterium thermoautotrophicum).